A 101-amino-acid polypeptide reads, in one-letter code: Large ribosomal subunit protein uL24 (101 aa).

It belongs to the universal ribosomal protein uL24 family. As to quaternary structure, part of the 50S ribosomal subunit.

Functionally, one of two assembly initiator proteins, it binds directly to the 5'-end of the 23S rRNA, where it nucleates assembly of the 50S subunit. Its function is as follows. One of the proteins that surrounds the polypeptide exit tunnel on the outside of the subunit. The protein is Large ribosomal subunit protein uL24 of Borrelia recurrentis (strain A1).